The following is a 485-amino-acid chain: Proline--tRNA ligase (485 aa).

Belongs to the class-II aminoacyl-tRNA synthetase family. ProS type 3 subfamily. In terms of assembly, homodimer.

Its subcellular location is the cytoplasm. It carries out the reaction tRNA(Pro) + L-proline + ATP = L-prolyl-tRNA(Pro) + AMP + diphosphate. Functionally, catalyzes the attachment of proline to tRNA(Pro) in a two-step reaction: proline is first activated by ATP to form Pro-AMP and then transferred to the acceptor end of tRNA(Pro). This Aeropyrum pernix (strain ATCC 700893 / DSM 11879 / JCM 9820 / NBRC 100138 / K1) protein is Proline--tRNA ligase.